The following is a 99-amino-acid chain: NADH-quinone oxidoreductase subunit K (99 aa).

3 helical membrane-spanning segments follow: residues 3–23, 28–48, and 59–79; these read PANY…GVLV, IVVF…LVTF, and IMAF…LAII.

The protein belongs to the complex I subunit 4L family. In terms of assembly, NDH-1 is composed of 14 different subunits. Subunits NuoA, H, J, K, L, M, N constitute the membrane sector of the complex.

It is found in the cell membrane. The enzyme catalyses a quinone + NADH + 5 H(+)(in) = a quinol + NAD(+) + 4 H(+)(out). Functionally, NDH-1 shuttles electrons from NADH, via FMN and iron-sulfur (Fe-S) centers, to quinones in the respiratory chain. The immediate electron acceptor for the enzyme in this species is believed to be a menaquinone. Couples the redox reaction to proton translocation (for every two electrons transferred, four hydrogen ions are translocated across the cytoplasmic membrane), and thus conserves the redox energy in a proton gradient. The protein is NADH-quinone oxidoreductase subunit K of Frankia casuarinae (strain DSM 45818 / CECT 9043 / HFP020203 / CcI3).